A 189-amino-acid chain; its full sequence is Proline-rich protein 29 (189 aa).

A disordered region spans residues 152 to 189; the sequence is SREREVRAVPPPPPPSATGTVGADVPPASDYYDAESLL.

In Homo sapiens (Human), this protein is Proline-rich protein 29 (PRR29).